Reading from the N-terminus, the 1405-residue chain is MVDLQLHQSLGHHNFTNKLTFYVNGVKRTISNPDPRGTLLDFIRTHEGLTGTKLGCSEGGCGACTVVVASWDREQGEIIYSAVNSCIVPLVAVEGKHLITVEGIGSSNNPHPAQERIALFHGSQCGFCTPGIVMSLYALLRNTGGQPSKEQIAESFDGNLCRCTGYKPIIDAANTFSCGRPGGCCRDNASGKANGAGATVGNGMANGAAAVANGNGAAANGCCKGNGAANGCCKSNGSAATTANGDDKEVDMNKLFTPNGLPLKPYSAKTELIFPPALKKYELNPLFFGNEQKVWFRPVTKLQLLQIKHAYPESKIVGGASEIQIEIKMKAANYNISVYANDIEELKTHKYIPGKGLEFGANISLSKLEEVCDKLVHELDPNVSQIYGAILEQLKYFAGRQIRNAATPAGNIATASPISDLNPVLVAAEAVLTVESIENGEEQISMTDFFVGYRKTKLPAHGVITKIFVPETVPRNEVVMAYKQAKRKDDDIAIVTACLRLALDDDFRISKARLAYGGVGPFTTAAKGTAEFLTGKLLRRETAKEVLEGAIDCLIKEFDLPYSVPGGMAAYRRTLIMSFFYKFYSTVLEKIGLAGEAQDNSALENTYDPQALLEVTRKHPVGSRDLTNPYEQRIVGKSDPHLSALKQVTGEAVYIDDIPPYHGECFGVQVMSTKPRARILSVDPSPALEVEGVVGYVDVNDLPSREANIWGPTPVGKEPFFADGEVYYVGQCIGVIIATDRMIAEEAARLVKVEYEELETVITIEEAIEAQSFFDYQPKAEKGDVDGAFAESAYTFEGTSRIGSQEHFYLETQGSLVVPEPEDGEMKVYSSSQNPTETQVFVAQATGVPSSRIVARVKRLGGGFGGKESRCCHLSSIAAVAAKKYKRPVRMILSRSEDMLTAGQRHPFVMKWKVGLDKNYKFTALEAKLYANAGWSMDLTKGVIERAVLHAENCYDFPNARIQGIPCRTSVASNTAFRGFGGPQGMFMAECYIYEIADQLGIEPDTLREINYLVPGVSSTPFKQAITEDFTVPDMVKQIKKQSNYDDLRRQVEEFNSKHKWIKRGLAHVPTMFGISFGATFLNQAGALVHIYHDGSILLTHGGTEMGQGLHTKMAMVCAEELKVPLSQVFISETSTNTVPNTSASAASASSDLNGMAVKHACDQLNERLAPYRERLGENATMEQLAHAAYFDRVNLSANGFYKTPDIGFVWGDPNPKPAFFYFTQGCAVAMVEVNTLTGDWSNLRTDIVMDIGRPINQAIDYGQIEGAFVQGQGLFTIEESLWLRNGALFTRGPGAYKIPGFRDIPQEFNVGHLRDRPFKHLKTIHRSKGIGEPPLFLGSSVFFAIRDALSYARRQNLGEATMPAGLVAPMTTERIRMLAGDSLYEHKGKIEPTEGDDKPFFVNA.

One can recognise a 2Fe-2S ferredoxin-type domain in the interval 17-104 (NKLTFYVNGV…GKHLITVEGI (88 aa)). [2Fe-2S] cluster contacts are provided by C56, C61, C64, C86, C125, C128, C161, and C163. One can recognise an FAD-binding PCMH-type domain in the interval 288–474 (FGNEQKVWFR…TKIFVPETVP (187 aa)). Residues 316 to 323 (IVGGASEI), F397, 407 to 411 (TPAGN), D420, I464, and K483 each bind FAD. Residues Q833 and F864 each coordinate Mo-molybdopterin. Substrate is bound by residues E868 and R946. R978 serves as a coordination point for Mo-molybdopterin. F980 lines the substrate pocket. Position 1147 (A1147) interacts with Mo-molybdopterin. The active-site Proton acceptor is E1333.

It belongs to the xanthine dehydrogenase family. In terms of assembly, homodimer. Requires Mo-molybdopterin as cofactor. [2Fe-2S] cluster serves as cofactor. It depends on FAD as a cofactor.

It is found in the cytoplasm. It carries out the reaction hypoxanthine + NAD(+) + H2O = xanthine + NADH + H(+). The enzyme catalyses xanthine + NAD(+) + H2O = urate + NADH + H(+). It functions in the pathway purine metabolism. Completely inhibited by allopurinol and significantly inhibited by adenine. Inhibited by Fe(2+), Cd(2+) and Zn(2+) and strongly inhibited by Cu(2+). Mg(2+) and Mo(2+) have no effect on activity. Functionally, key enzyme in purine degradation. Catalyzes the oxidation of hypoxanthine to xanthine. Catalyzes the oxidation of xanthine to uric acid. Oxidizes xanthine, hypoxanthine and pterine at high rates. Can also act on purine and guanine. The sequence is that of Xanthine dehydrogenase from Blastobotrys adeninivorans (Yeast).